The chain runs to 340 residues: ATP-dependent 6-phosphofructokinase (340 aa).

G11 is a binding site for ATP. 21 to 25 (RAVVR) lines the ADP pocket. ATP-binding positions include 72–73 (RY) and 102–105 (GDGS). D103 provides a ligand contact to Mg(2+). 125–127 (TID) lines the substrate pocket. D127 functions as the Proton acceptor in the catalytic mechanism. R154 is a binding site for ADP. Substrate is bound by residues R162 and 169 to 171 (MGR). Residues 185-187 (GAD), K211, and 213-215 (KNH) contribute to the ADP site. Substrate-binding positions include E222, R244, and 250–253 (HIQR).

Belongs to the phosphofructokinase type A (PFKA) family. ATP-dependent PFK group I subfamily. Prokaryotic clade 'B1' sub-subfamily. In terms of assembly, homotetramer. Mg(2+) is required as a cofactor.

The protein localises to the cytoplasm. The catalysed reaction is beta-D-fructose 6-phosphate + ATP = beta-D-fructose 1,6-bisphosphate + ADP + H(+). Its pathway is carbohydrate degradation; glycolysis; D-glyceraldehyde 3-phosphate and glycerone phosphate from D-glucose: step 3/4. Allosterically activated by ADP and other diphosphonucleosides, and allosterically inhibited by phosphoenolpyruvate. Its function is as follows. Catalyzes the phosphorylation of D-fructose 6-phosphate to fructose 1,6-bisphosphate by ATP, the first committing step of glycolysis. The chain is ATP-dependent 6-phosphofructokinase from Lactococcus lactis subsp. lactis (Streptococcus lactis).